The chain runs to 479 residues: Polyadenylate-binding protein-interacting protein 1 (479 aa).

Residues 1–114 are disordered; it reads MSDGFDRAPG…PQQNSESAMA (114 aa). The residue at position 2 (Ser2) is an N-acetylalanine. A compositionally biased stretch (gly residues) spans 11–33; that stretch reads AGRGRSRGLGRGGGGPEGGGFPN. Arg21 is subject to Omega-N-methylarginine. A compositionally biased stretch (pro residues) spans 45-69; it reads PPQPKAPGFLQPPPLRQPRTTPPPG. A compositionally biased stretch (polar residues) spans 98-111; sequence PSSQDKIPQQNSES. Residues 116–143 are PABPC1-interacting motif-2 (PAM2); it reads PQVVVAPVLMSKLSVNAPEFYPSGYSSS. The PAIP1 middle domain (PAIP1M) stretch occupies residues 157 to 375; that stretch reads TLSEYVQDFL…LLKLVELRSS (219 aa). Residues 159 to 376 enclose the MIF4G domain; the sequence is SEYVQDFLNH…LKLVELRSSN (218 aa). Residues 435-455 form a disordered region; that stretch reads DYEENGTDLSGAGDPYLDDID. The PABPC1-interacting motif-1 (PAM1) stretch occupies residues 440–479; the sequence is GTDLSGAGDPYLDDIDDEMDPEIEEAYEKFCLESERKRKQ.

In terms of assembly, interacts with the RRM1-RRM2 and C-terminus regions of PABPC1 in a 1:1 stoichiometry. Interacts with EIF4A. (Microbial infection) Interacts (via PAIP1M) with human SARS coronaviruses SARS-COV and SARS-COV-2 NSP3 protein (via SARS-unique domain); the interaction increases binding affinity with PABPC1.

It is found in the cytoplasm. Acts as a coactivator in the regulation of translation initiation of poly(A)-containing mRNAs. Its stimulatory activity on translation is mediated via its action on PABPC1. Competes with PAIP2 for binding to PABPC1. Its association with EIF4A and PABPC1 may potentiate contacts between mRNA termini. May also be involved in translationally coupled mRNA turnover. Implicated with other RNA-binding proteins in the cytoplasmic deadenylation/translational and decay interplay of the FOS mRNA mediated by the major coding-region determinant of instability (mCRD) domain. In terms of biological role, (Microbial infection) Upon interaction with SARS coronavirus SARS-CoV NSP3 protein, plays an important role in viral protein synthesis. This Homo sapiens (Human) protein is Polyadenylate-binding protein-interacting protein 1.